A 207-amino-acid chain; its full sequence is Protein LURP1 (207 aa).

Belongs to the LOR family. In terms of tissue distribution, limited to discrete pathogen infection sites in leaves.

In terms of biological role, involved in basal defense against virulent oomycetes. Might be related to the phospholipid scramblase and tubby-like superfamily of membrane tethered transcription factors. The sequence is that of Protein LURP1 (LURP1) from Arabidopsis thaliana (Mouse-ear cress).